The following is a 427-amino-acid chain: UDP-N-acetylglucosamine 1-carboxyvinyltransferase 1 (427 aa).

23-24 is a phosphoenolpyruvate binding site; the sequence is KN. Arginine 96 provides a ligand contact to UDP-N-acetyl-alpha-D-glucosamine. Cysteine 120 functions as the Proton donor in the catalytic mechanism. A 2-(S-cysteinyl)pyruvic acid O-phosphothioketal modification is found at cysteine 120. Residues 125-129, aspartate 309, and valine 331 each bind UDP-N-acetyl-alpha-D-glucosamine; that span reads RPIDL.

It belongs to the EPSP synthase family. MurA subfamily.

Its subcellular location is the cytoplasm. The catalysed reaction is phosphoenolpyruvate + UDP-N-acetyl-alpha-D-glucosamine = UDP-N-acetyl-3-O-(1-carboxyvinyl)-alpha-D-glucosamine + phosphate. It functions in the pathway cell wall biogenesis; peptidoglycan biosynthesis. Cell wall formation. Adds enolpyruvyl to UDP-N-acetylglucosamine. This is UDP-N-acetylglucosamine 1-carboxyvinyltransferase 1 from Streptococcus pneumoniae (strain ATCC BAA-255 / R6).